Reading from the N-terminus, the 285-residue chain is Glutamate racemase (285 aa).

Residues 28–29 (DS) and 60–61 (YG) each bind substrate. Cysteine 92 serves as the catalytic Proton donor/acceptor. Substrate is bound at residue 93 to 94 (NT). Catalysis depends on cysteine 204, which acts as the Proton donor/acceptor. Position 205 to 206 (205 to 206 (TH)) interacts with substrate.

This sequence belongs to the aspartate/glutamate racemases family.

It carries out the reaction L-glutamate = D-glutamate. It participates in cell wall biogenesis; peptidoglycan biosynthesis. Its function is as follows. Provides the (R)-glutamate required for cell wall biosynthesis. This chain is Glutamate racemase, found in Shigella flexneri serotype 5b (strain 8401).